The primary structure comprises 397 residues: CCA-adding enzyme (397 aa).

ATP is bound by residues Gly26 and Arg29. Gly26 and Arg29 together coordinate CTP. Positions 39 and 41 each coordinate Mg(2+). Residues Arg110, Asp153, Arg156, Arg159, and Arg162 each contribute to the ATP site. Residues Arg110, Asp153, Arg156, Arg159, and Arg162 each contribute to the CTP site.

The protein belongs to the tRNA nucleotidyltransferase/poly(A) polymerase family. Bacterial CCA-adding enzyme type 3 subfamily. Homodimer. The cofactor is Mg(2+).

It carries out the reaction a tRNA precursor + 2 CTP + ATP = a tRNA with a 3' CCA end + 3 diphosphate. The enzyme catalyses a tRNA with a 3' CCA end + 2 CTP + ATP = a tRNA with a 3' CCACCA end + 3 diphosphate. In terms of biological role, catalyzes the addition and repair of the essential 3'-terminal CCA sequence in tRNAs without using a nucleic acid template. Adds these three nucleotides in the order of C, C, and A to the tRNA nucleotide-73, using CTP and ATP as substrates and producing inorganic pyrophosphate. tRNA 3'-terminal CCA addition is required both for tRNA processing and repair. Also involved in tRNA surveillance by mediating tandem CCA addition to generate a CCACCA at the 3' terminus of unstable tRNAs. While stable tRNAs receive only 3'-terminal CCA, unstable tRNAs are marked with CCACCA and rapidly degraded. This is CCA-adding enzyme from Bacillus cereus (strain 03BB102).